The chain runs to 63 residues: Large ribosomal subunit protein uL29 (63 aa).

It belongs to the universal ribosomal protein uL29 family.

This is Large ribosomal subunit protein uL29 (rpmC) from Aggregatibacter actinomycetemcomitans (Actinobacillus actinomycetemcomitans).